The primary structure comprises 415 residues: E3 ubiquitin-protein ligase RNF135 (415 aa).

An RING-type zinc finger spans residues 21–67; the sequence is CIICQGLLDWPTTLPCGHSFCLQCLKDLWVSKRAGVDSCPWACPICR. The stretch at 181-206 forms a coiled coil; the sequence is TFSASQKKIQEILRDLEKIQETLQGS. Residues 228–415 form the B30.2/SPRY domain; it reads PDQRYPVSRK…LTPGNYLEIL (188 aa).

In terms of assembly, homodimer. Interacts (homodimer) with RIGI (double-stranded RNA-bound oligomeric form); involved in both RIGI ubiquitination, oligomerization into filaments associated with viral RNAs and the bridging of these filaments. Interacts with UBE2D3 and UBE2N; E2 ubiquitin ligases involved in RNF135-mediated ubiquitination of RIGI and activation of the RIG-I signaling pathway. Interacts with PCBP2.

The protein resides in the cytoplasm. Its subcellular location is the stress granule. The enzyme catalyses S-ubiquitinyl-[E2 ubiquitin-conjugating enzyme]-L-cysteine + [acceptor protein]-L-lysine = [E2 ubiquitin-conjugating enzyme]-L-cysteine + N(6)-ubiquitinyl-[acceptor protein]-L-lysine.. The protein operates within protein modification; protein ubiquitination. In terms of biological role, E2-dependent E3 ubiquitin-protein ligase that functions as a RIGI coreceptor in the sensing of viral RNAs in cell cytoplasm and the activation of the antiviral innate immune response. Together with the UBE2D3, UBE2N and UB2V1 E2 ligases, catalyzes the 'Lys-63'-linked polyubiquitination of RIGI oligomerized on viral RNAs, an essential step in the activation of the RIG-I signaling pathway. Through a ubiquitin-independent parallel mechanism, which consists in bridging RIGI filaments forming on longer viral RNAs, further activates the RIG-I signaling pathway. This second mechanism that synergizes with the ubiquitin-dependent one would thereby allow an RNA length-dependent regulation of the RIG-I signaling pathway. Associated with the E2 ligase UBE2N, also constitutively synthesizes unanchored 'Lys-63'-linked polyubiquitin chains that may also activate the RIG-I signaling pathway. In Rattus norvegicus (Rat), this protein is E3 ubiquitin-protein ligase RNF135.